Reading from the N-terminus, the 236-residue chain is Biosynthetic peptidoglycan transglycosylase (236 aa).

A helical transmembrane segment spans residues 12–31 (ALLWFAAGSALVVLVLRWVP).

Belongs to the glycosyltransferase 51 family.

It localises to the cell inner membrane. The catalysed reaction is [GlcNAc-(1-&gt;4)-Mur2Ac(oyl-L-Ala-gamma-D-Glu-L-Lys-D-Ala-D-Ala)](n)-di-trans,octa-cis-undecaprenyl diphosphate + beta-D-GlcNAc-(1-&gt;4)-Mur2Ac(oyl-L-Ala-gamma-D-Glu-L-Lys-D-Ala-D-Ala)-di-trans,octa-cis-undecaprenyl diphosphate = [GlcNAc-(1-&gt;4)-Mur2Ac(oyl-L-Ala-gamma-D-Glu-L-Lys-D-Ala-D-Ala)](n+1)-di-trans,octa-cis-undecaprenyl diphosphate + di-trans,octa-cis-undecaprenyl diphosphate + H(+). It functions in the pathway cell wall biogenesis; peptidoglycan biosynthesis. Peptidoglycan polymerase that catalyzes glycan chain elongation from lipid-linked precursors. The polypeptide is Biosynthetic peptidoglycan transglycosylase (Pseudomonas syringae pv. tomato (strain ATCC BAA-871 / DC3000)).